Reading from the N-terminus, the 182-residue chain is Isopentenyl-diphosphate Delta-isomerase (182 aa).

Mn(2+)-binding residues include histidine 25 and histidine 32. Residues 30–164 (LLHLAFSSWL…PWAFSPWMVM (135 aa)) form the Nudix hydrolase domain. The active site involves cysteine 67. Histidine 69 lines the Mn(2+) pocket. A Mg(2+)-binding site is contributed by glutamate 87. Glutamate 114 and glutamate 116 together coordinate Mn(2+). The active site involves glutamate 116.

This sequence belongs to the IPP isomerase type 1 family. Homodimer. Mg(2+) is required as a cofactor. Requires Mn(2+) as cofactor.

It localises to the cytoplasm. It catalyses the reaction isopentenyl diphosphate = dimethylallyl diphosphate. It participates in isoprenoid biosynthesis; dimethylallyl diphosphate biosynthesis; dimethylallyl diphosphate from isopentenyl diphosphate: step 1/1. In terms of biological role, catalyzes the 1,3-allylic rearrangement of the homoallylic substrate isopentenyl (IPP) to its highly electrophilic allylic isomer, dimethylallyl diphosphate (DMAPP). This Shigella flexneri serotype 5b (strain 8401) protein is Isopentenyl-diphosphate Delta-isomerase.